The following is a 1361-amino-acid chain: DNA-directed RNA polymerase subunit beta (1361 aa).

Belongs to the RNA polymerase beta chain family. The RNAP catalytic core consists of 2 alpha, 1 beta, 1 beta' and 1 omega subunit. When a sigma factor is associated with the core the holoenzyme is formed, which can initiate transcription.

The catalysed reaction is RNA(n) + a ribonucleoside 5'-triphosphate = RNA(n+1) + diphosphate. In terms of biological role, DNA-dependent RNA polymerase catalyzes the transcription of DNA into RNA using the four ribonucleoside triphosphates as substrates. This chain is DNA-directed RNA polymerase subunit beta, found in Dichelobacter nodosus (strain VCS1703A).